A 724-amino-acid polypeptide reads, in one-letter code: Golgin subfamily A member 6-like protein 6 (724 aa).

5 disordered regions span residues 1–108 (MLMW…HQEA), 314–342 (QEEKIREQEEKMRRQEEMMWEKEEKMRRQ), 374–454 (MHEQ…EMWR), 517–548 (QEEMWREEEKMHEQEKIWEEEKRQEQEDKMWR), and 561–724 (WRQE…MQEH). A compositionally biased stretch (basic residues) spans 15 to 29 (LPTHPHLPTHPHLPT). Basic and acidic residues predominate over residues 39–60 (MSKETRQSKLAEAKEQLTDHHP). Polar residues-rich tracts occupy residues 61–71 (QTNPSVGTAAS) and 79–91 (NNGTNPETTTSGG). Positions 94–108 (SPEDEQKASHQHQEA) are enriched in basic and acidic residues. Positions 164–686 (ELEQALSAVA…EKMWEQEEKM (523 aa)) form a coiled coil.

The protein belongs to the GOLGA6 family.

The polypeptide is Golgin subfamily A member 6-like protein 6 (GOLGA6L6) (Homo sapiens (Human)).